We begin with the raw amino-acid sequence, 604 residues long: DNA polymerase alpha subunit B (604 aa).

Positions 109–171 (ETLLNSYTTP…KYSSRSNRGE (63 aa)) are disordered. Residues 113–141 (NSYTTPSKGSQKRTITTPETPLTKRSVSA) show a composition bias toward polar residues. A phosphothreonine mark is found at T129 and T132. S143, S149, S154, and S156 each carry phosphoserine. Over residues 143-160 (SPHQLLSPSSFSPSATPP) the composition is skewed to low complexity.

The protein belongs to the DNA polymerase alpha subunit B family. Component of the alpha DNA polymerase complex (also known as the alpha DNA polymerase-primase complex) consisting of four subunits: the catalytic subunit POLA1, the regulatory subunit POLA2, and the primase complex subunits PRIM1 and PRIM2 respectively. Within the complex, POLA1 directly interacts with PRIM2. Phosphorylated in a cell cycle-dependent manner, in G2/M phase.

It is found in the nucleus. Accessory subunit of the DNA polymerase alpha complex (also known as the alpha DNA polymerase-primase complex) which plays an essential role in the initiation of DNA synthesis. During the S phase of the cell cycle, the DNA polymerase alpha complex (composed of a catalytic subunit POLA1, an accessory subunit POLA2 and two primase subunits, the catalytic subunit PRIM1 and the regulatory subunit PRIM2) is recruited to DNA at the replicative forks via direct interactions with MCM10 and WDHD1. The primase subunit of the polymerase alpha complex initiates DNA synthesis by oligomerising short RNA primers on both leading and lagging strands. These primers are initially extended by the polymerase alpha catalytic subunit and subsequently transferred to polymerase delta and polymerase epsilon for processive synthesis on the lagging and leading strand, respectively. The sequence is that of DNA polymerase alpha subunit B (POLA2) from Bos taurus (Bovine).